The sequence spans 197 residues: Ion-translocating oxidoreductase complex subunit B (197 aa).

Positions 1-26 (MSTILIAIIALAVLAAVFGAILGFAS) are hydrophobic. Residues 32–90 (EADPIVDQIDTILPQTQCGQCGYPGCRPYAEAIANGDKINKCPPGGQATIEKLADLMGV) enclose the 4Fe-4S domain. 12 residues coordinate [4Fe-4S] cluster: C49, C52, C57, C73, C114, C117, C120, C124, C144, C147, C150, and C154. 2 4Fe-4S ferredoxin-type domains span residues 105-134 (TVAF…GGTK) and 135-164 (ALHT…MIPV).

It belongs to the 4Fe4S bacterial-type ferredoxin family. RnfB subfamily. As to quaternary structure, the complex is composed of six subunits: RnfA, RnfB, RnfC, RnfD, RnfE and RnfG. [4Fe-4S] cluster is required as a cofactor.

Its subcellular location is the cell inner membrane. Functionally, part of a membrane-bound complex that couples electron transfer with translocation of ions across the membrane. In Vibrio atlanticus (strain LGP32) (Vibrio splendidus (strain Mel32)), this protein is Ion-translocating oxidoreductase complex subunit B.